A 650-amino-acid polypeptide reads, in one-letter code: Macrolide export ATP-binding/permease protein MacB (650 aa).

One can recognise an ABC transporter domain in the interval 9 to 248; it reads IELIDLERVF…RPLGRPPGGA (240 aa). 45–52 serves as a coordination point for ATP; sequence GQSGSGKS. A run of 4 helical transmembrane segments spans residues 276-296, 525-545, 580-600, and 615-635; these read ALTL…MAIG, LTLL…IGVM, AVAV…GAAL, and PPIV…YLPA.

This sequence belongs to the ABC transporter superfamily. Macrolide exporter (TC 3.A.1.122) family. As to quaternary structure, homodimer.

The protein resides in the cell inner membrane. In terms of biological role, non-canonical ABC transporter that contains transmembrane domains (TMD), which form a pore in the inner membrane, and an ATP-binding domain (NBD), which is responsible for energy generation. Confers resistance against macrolides. The chain is Macrolide export ATP-binding/permease protein MacB from Rhodospirillum rubrum (strain ATCC 11170 / ATH 1.1.1 / DSM 467 / LMG 4362 / NCIMB 8255 / S1).